The chain runs to 219 residues: Octanoyltransferase (219 aa).

Residues 32–207 enclose the BPL/LPL catalytic domain; the sequence is SSSPDQLWIV…TFSHNLGYQN (176 aa). Residues 71–78, 138–140, and 151–153 each bind substrate; these read RGGQVTYH, SLG, and GLA. Cys169 serves as the catalytic Acyl-thioester intermediate.

This sequence belongs to the LipB family.

It is found in the cytoplasm. The catalysed reaction is octanoyl-[ACP] + L-lysyl-[protein] = N(6)-octanoyl-L-lysyl-[protein] + holo-[ACP] + H(+). The protein operates within protein modification; protein lipoylation via endogenous pathway; protein N(6)-(lipoyl)lysine from octanoyl-[acyl-carrier-protein]: step 1/2. Its function is as follows. Catalyzes the transfer of endogenously produced octanoic acid from octanoyl-acyl-carrier-protein onto the lipoyl domains of lipoate-dependent enzymes. Lipoyl-ACP can also act as a substrate although octanoyl-ACP is likely to be the physiological substrate. This chain is Octanoyltransferase, found in Shewanella woodyi (strain ATCC 51908 / MS32).